The primary structure comprises 744 residues: Elongation factor G, mitochondrial (744 aa).

The transit peptide at 1 to 25 directs the protein to the mitochondrion; that stretch reads MTISCLLRIRPALAKSFFENGQRAF. Positions 38-315 constitute a tr-type G domain; it reads ERIRNIGISA…AVLDYLPNPG (278 aa). GTP-binding positions include 47 to 54, 114 to 118, and 168 to 171; these read AHIDSGKT, DTPGH, and NKLD.

Belongs to the TRAFAC class translation factor GTPase superfamily. Classic translation factor GTPase family. EF-G/EF-2 subfamily.

It localises to the mitochondrion. It participates in protein biosynthesis; polypeptide chain elongation. Mitochondrial GTPase that catalyzes the GTP-dependent ribosomal translocation step during translation elongation. During this step, the ribosome changes from the pre-translocational (PRE) to the post-translocational (POST) state as the newly formed A-site-bound peptidyl-tRNA and P-site-bound deacylated tRNA move to the P and E sites, respectively. Catalyzes the coordinated movement of the two tRNA molecules, the mRNA and conformational changes in the ribosome. The chain is Elongation factor G, mitochondrial from Culex quinquefasciatus (Southern house mosquito).